Consider the following 85-residue polypeptide: Small ribosomal subunit protein bS20 (85 aa).

This sequence belongs to the bacterial ribosomal protein bS20 family.

Its function is as follows. Binds directly to 16S ribosomal RNA. The chain is Small ribosomal subunit protein bS20 from Borrelia turicatae (strain 91E135).